A 456-amino-acid polypeptide reads, in one-letter code: MTLLGWLIFLAPWGVAGAQLGRFWHISDLHLDPNYTVSKDPLQVCPSAGSQPVLNAGPWGDYLCDSPWALINSSLYAMKEIEPKPDFILWTGDDTPHVPNESLGEAAVLAIVERLTNLIKEVFPDTKVYAALGNHDFHPKNQFPAQSNRIYNQVAELWRPWLSNESYALFKRGAFYSEKLPGPSRAGRVVVLNTNLYYSNNEQTAGMADPGEQFRWLGDVLSNASRDGEMVYVIGHVPPGFFEKTQNKAWFRESFNEEYLKVIQKHHRVIAGQFFGHHHTDSFRMFYDNTGAPINVMFLTPGVTPWKTTLPGVVDGANNPGIRIFEYDRATLNLKDLVTYFLNLRQANVQETPRWEQEYRLTEAYQVPDASVSSMHTALTRIASEPHILQRYYVYNSVSYNHLTCEDSCRIEHVCAIQHVAFNTYATCLHGLGAKLVPGFLLILTLLPSLHVLEVL.

The first 18 residues, 1–18, serve as a signal peptide directing secretion; that stretch reads MTLLGWLIFLAPWGVAGA. Residues Asp-28 and His-30 each coordinate Zn(2+). N-linked (GlcNAc...) asparagine glycosylation is present at Asn-34. Cys-45 and Cys-64 are joined by a disulfide. Asn-72 is a glycosylation site (N-linked (GlcNAc...) asparagine). Position 93 (Asp-93) interacts with Zn(2+). Asn-100 is a glycosylation site (N-linked (GlcNAc...) asparagine). Asn-134 contributes to the Zn(2+) binding site. Residues Asn-164 and Asn-223 are each glycosylated (N-linked (GlcNAc...) asparagine). Positions 236, 277, and 279 each coordinate Zn(2+). Disulfide bonds link Cys-405/Cys-409 and Cys-415/Cys-428.

Belongs to the acid sphingomyelinase family. In terms of assembly, interacts with TLR4, TLR7, TLR8 and TLR9. Requires Zn(2+) as cofactor. Post-translationally, N-glycosylated. Macrophages and dendritic cells.

Its subcellular location is the secreted. It localises to the cell membrane. Its function is as follows. Lipid-modulating phosphodiesterase. Active on the surface of macrophages and dendritic cells and strongly influences macrophage lipid composition and membrane fluidity. Acts as a negative regulator of Toll-like receptor signaling. Has in vitro phosphodiesterase activity, but the physiological substrate is unknown. Lacks activity with phosphocholine-containing lipids, but can cleave CDP-choline, and can release phosphate from ATP and ADP (in vitro). The polypeptide is Acid sphingomyelinase-like phosphodiesterase 3b (Smpdl3b) (Mus musculus (Mouse)).